The primary structure comprises 192 residues: Ion-translocating oxidoreductase complex subunit B (192 aa).

Residues 1-26 (MNTIWIAVGALTLLGLVFGAILGYAS) form a hydrophobic region. Residues 32–91 (EDDPVVEKIDAILPQSQCGQCGYPGCRPYAEAVGLQGEKINRCAPGGEAVMLKMAELLNV) form the 4Fe-4S domain. Positions 49, 52, 57, 74, 117, 120, 123, 127, 147, 150, 153, and 157 each coordinate [4Fe-4S] cluster. 4Fe-4S ferredoxin-type domains lie at 108 to 137 (MLAV…GATR) and 138 to 167 (AMHT…LRPV).

It belongs to the 4Fe4S bacterial-type ferredoxin family. RnfB subfamily. As to quaternary structure, the complex is composed of six subunits: RsxA, RsxB, RsxC, RsxD, RsxE and RsxG. The cofactor is [4Fe-4S] cluster.

It localises to the cell inner membrane. Functionally, part of a membrane-bound complex that couples electron transfer with translocation of ions across the membrane. Required to maintain the reduced state of SoxR. This chain is Ion-translocating oxidoreductase complex subunit B, found in Salmonella agona (strain SL483).